The sequence spans 807 residues: Microbial collagenase (807 aa).

The signal sequence occupies residues 1-27 (MSHLLPFPRRRLALACLLASISGASFG). Position 434 (His434) interacts with Zn(2+). Glu435 is a catalytic residue. His438 provides a ligand contact to Zn(2+). A disordered region spans residues 562-585 (EVTPENPDTDPDTPTEPSDGVTQL).

This sequence belongs to the peptidase M9A family. It depends on Zn(2+) as a cofactor.

It is found in the secreted. The enzyme catalyses Digestion of native collagen in the triple helical region at Xaa-|-Gly bonds. With synthetic peptides, a preference is shown for Gly at P3 and P1', Pro and Ala at P2 and P2', and hydroxyproline, Ala or Arg at P3'.. Functionally, possesses gelatinolytic activity. This Vibrio vulnificus (strain CMCP6) protein is Microbial collagenase.